Reading from the N-terminus, the 655-residue chain is Large subunit GTPase 1 homolog (655 aa).

The disordered stretch occupies residues 1-31 (MGRRRAPGGGSLGRVLIRHQTQRSRSHRHTD). Basic residues predominate over residues 16–28 (LIRHQTQRSRSHR). 2 positions are modified to phosphoserine: Ser-93 and Ser-97. The CP-type G domain maps to 164 to 441 (WRQLWRVIER…LCDCPGLVMP (278 aa)). 212–215 (NKAD) is a GTP binding site. Phosphoserine is present on Ser-252. The tract at residues 253–359 (KDEVNSVAGE…ENSQMSNKSH (107 aa)) is disordered. Positions 288–327 (EESESDDDDSEYEDCQEDEEEDWQTCSEEDSNPEEGQEEG) are enriched in acidic residues. Basic and acidic residues predominate over residues 328–339 (GCDRDQKEHGPE). Positions 344–359 (QSRASPENSQMSNKSH) are enriched in polar residues. Residues 390-397 (GYPNVGKS) and 434-437 (DCPG) contribute to the GTP site. The segment at 625 to 655 (SAENVPGKPWKKHGNRNKKEKSRRLYRHLDV) is disordered. A compositionally biased stretch (basic residues) spans 633–655 (PWKKHGNRNKKEKSRRLYRHLDV).

The protein belongs to the TRAFAC class YlqF/YawG GTPase family. LSG1 subfamily.

It is found in the cytoplasm. The protein resides in the endoplasmic reticulum. The protein localises to the nucleus. Its subcellular location is the cajal body. The catalysed reaction is GTP + H2O = GDP + phosphate + H(+). Functions as a GTPase. May act by mediating the release of NMD3 from the 60S ribosomal subunit after export into the cytoplasm during the 60S ribosomal subunit maturation. The sequence is that of Large subunit GTPase 1 homolog from Rattus norvegicus (Rat).